A 336-amino-acid chain; its full sequence is Anthranilate phosphoribosyltransferase (336 aa).

Residues Gly82, 85–86 (GD), Thr90, 92–95 (NIST), 110–118 (KHGNRSVSS), and Ser122 each bind 5-phospho-alpha-D-ribose 1-diphosphate. Gly82 provides a ligand contact to anthranilate. A Mg(2+)-binding site is contributed by Ser94. Anthranilate is bound at residue Asn113. Residue Arg168 coordinates anthranilate. Mg(2+) contacts are provided by Asp227 and Glu228.

It belongs to the anthranilate phosphoribosyltransferase family. As to quaternary structure, homodimer. Mg(2+) serves as cofactor.

It carries out the reaction N-(5-phospho-beta-D-ribosyl)anthranilate + diphosphate = 5-phospho-alpha-D-ribose 1-diphosphate + anthranilate. It functions in the pathway amino-acid biosynthesis; L-tryptophan biosynthesis; L-tryptophan from chorismate: step 2/5. Its function is as follows. Catalyzes the transfer of the phosphoribosyl group of 5-phosphorylribose-1-pyrophosphate (PRPP) to anthranilate to yield N-(5'-phosphoribosyl)-anthranilate (PRA). The protein is Anthranilate phosphoribosyltransferase of Leptospira interrogans serogroup Icterohaemorrhagiae serovar Lai (strain 56601).